The sequence spans 593 residues: Translation initiation factor IF-2 (593 aa).

In terms of domain architecture, tr-type G spans 101–270 (LRPPVVTIMG…LLIAELEDLR (170 aa)). The interval 110-117 (GHVDHGKT) is G1. 110–117 (GHVDHGKT) lines the GTP pocket. Residues 135–139 (GITQH) form a G2 region. Residues 156–159 (DTPG) form a G3 region. Residues 156–160 (DTPGH) and 210–213 (NKMD) contribute to the GTP site. The tract at residues 210-213 (NKMD) is G4. Residues 246 to 248 (SAR) are G5.

The protein belongs to the TRAFAC class translation factor GTPase superfamily. Classic translation factor GTPase family. IF-2 subfamily.

Its subcellular location is the cytoplasm. Functionally, one of the essential components for the initiation of protein synthesis. Protects formylmethionyl-tRNA from spontaneous hydrolysis and promotes its binding to the 30S ribosomal subunits. Also involved in the hydrolysis of GTP during the formation of the 70S ribosomal complex. This chain is Translation initiation factor IF-2, found in Dehalococcoides mccartyi (strain CBDB1).